We begin with the raw amino-acid sequence, 432 residues long: Tol-Pal system protein TolB (432 aa).

The N-terminal stretch at 1–21 is a signal peptide; that stretch reads MKKVIYTIVGFVFMWSTSVYA.

This sequence belongs to the TolB family. In terms of assembly, the Tol-Pal system is composed of five core proteins: the inner membrane proteins TolA, TolQ and TolR, the periplasmic protein TolB and the outer membrane protein Pal. They form a network linking the inner and outer membranes and the peptidoglycan layer.

The protein resides in the periplasm. Its function is as follows. Part of the Tol-Pal system, which plays a role in outer membrane invagination during cell division and is important for maintaining outer membrane integrity. The sequence is that of Tol-Pal system protein TolB from Hydrogenovibrio crunogenus (strain DSM 25203 / XCL-2) (Thiomicrospira crunogena).